The following is a 493-amino-acid chain: Voltage-gated potassium channel regulatory subunit KCNF1 (493 aa).

Topologically, residues 1-183 (MDASAEQSLP…KPESSCPARV (183 aa)) are cytoplasmic. Residues 184 to 204 (VAVLSFLLILVSSVVMCMGTI) form a helical membrane-spanning segment. A helical membrane pass occupies residues 224–244 (NVETACIGWFTLEYLLRLFSS). Topologically, residues 245 to 249 (PNKLH) are cytoplasmic. The helical transmembrane segment at 250 to 270 (FALSFMNIVDVLAILPFYVSL) threads the bilayer. Residues 290 to 310 (QALRIMRIARIFKLARHSSGL) form a helical; Voltage-sensor membrane-spanning segment. Residues 311–324 (QTLTYALKRSFKEL) lie on the Cytoplasmic side of the membrane. Residues 325–345 (GLLLMYLAVGIFVFSALGYTM) traverse the membrane as a helical segment. Residues 358-378 (PQSFWWAIITMTTVGYGDIYP) constitute an intramembrane region (pore-forming). A Selectivity filter motif is present at residues 370–375 (TVGYGD). Residues 386-406 (NAAISFLCGVIAIALPIHPII) form a helical membrane-spanning segment. Residues 407–493 (NNFVRYYNKQ…HHRTRLQSCK (87 aa)) lie on the Cytoplasmic side of the membrane. The interval 434–468 (SSSAEGKPGGSRSDLDTLPPEPAAREGPSWGSRLK) is disordered.

This sequence belongs to the potassium channel family. F (TC 1.A.1.2) subfamily. Kv5.1/KCNF1 sub-subfamily. In terms of assembly, heterotetramer with KCNB1 or KCNB2.

Its subcellular location is the cell membrane. Regulatory alpha-subunit of the voltage-gated potassium (Kv) channel which, when coassembled with KCNB1 or KCNB2, can modulate their expression and their gating kinetics by acting on deactivation upon repolarization and inactivation during maintained depolarization. Accelerates inactivation but has relatively little effect on deactivation. Coexpression with KCNB1 or KCNB2 markedly slows inactivation. Each modulatory subunit has its own specific properties of regulation, and can lead to extensive inhibitions, to large changes in kinetics, and/or to large shifts in the voltage dependencies of the inactivation process. The gating kinetics depends on the nature and stoichiometry of the associated regulatory sunbunit. Fails to produce a potassium current when expressed alone. The chain is Voltage-gated potassium channel regulatory subunit KCNF1 from Mus musculus (Mouse).